The primary structure comprises 428 residues: MLRNLFRRRLFSCPTKYYFMLLVLSLITFSVLRIHQKPEFFSVRHLELAGDDPYSNVNCTKILQGDPEEIQKVKLEILTVQFKKRPRRTPHDYINMTRDCASFIRTRKYIVEPLTKEEVGFPIAYSIVVHHKIEMLDRLLRAIYMPQNFYCIHVDRKAEESFLAAVQGIASCFDNVFVASQLESVVYASWSRVKADLNCMKDLYRMNANWKYLINLCGMDFPIKTNLEIVRKLKCSTGENNLETEKMPPNKEERWKKRYTVVDGKLTNTGIVKAPPPLKTPLFSGSAYFVVTREYVGYVLENENIQKLMEWAQDTYSPDEFLWATIQRIPEVPGSFPSSNKYDLSDMNAIARFVKWQYFEGHVSNGAPYPPCSGVHVRSVCVFGAGDLSWMLRQHHLFANKFDMDVDPFAIQCLDEHLRHKALENLEH.

The Cytoplasmic portion of the chain corresponds to 1–9 (MLRNLFRRR). Residues 5–9 (LFRRR) are mediates interaction with GOLPH3 and is necessary and sufficient for localization to the Golgi. Residues 10 to 32 (LFSCPTKYYFMLLVLSLITFSVL) form a helical; Signal-anchor for type II membrane protein membrane-spanning segment. The tract at residues 33-121 (RIHQKPEFFS…EPLTKEEVGF (89 aa)) is stem region. Over 33 to 428 (RIHQKPEFFS…RHKALENLEH (396 aa)) the chain is Lumenal. 2 N-linked (GlcNAc...) asparagine glycosylation sites follow: Asn58 and Asn95. Intrachain disulfides connect Cys59–Cys413, Cys100–Cys172, Cys151–Cys199, and Cys372–Cys381. Residues 122 to 428 (PIAYSIVVHH…RHKALENLEH (307 aa)) are catalytic. UDP-N-acetyl-alpha-D-glucosamine is bound by residues 128-130 (VVH), 155-157 (DRK), and Tyr187. Glu243, Asn250, Lys251, Arg254, Glu320, Lys341, and Tyr358 together coordinate a glycoprotein. The active-site Nucleophile is Glu320. The UDP-N-acetyl-alpha-D-glucosamine site is built by Arg378 and Lys401.

Belongs to the glycosyltransferase 14 family. As to quaternary structure, interacts with GOLPH3; may control GCNT1 retention in the Golgi. N-glycosylated. In terms of tissue distribution, expressed in kidney, liver, stomach, spleen, lung and brain.

The protein resides in the golgi apparatus membrane. The enzyme catalyses a 3-O-[beta-D-galactosyl-(1-&gt;3)-N-acetyl-alpha-D-galactosaminyl]-L-seryl-[protein] + UDP-N-acetyl-alpha-D-glucosamine = 3-O-{beta-D-galactosyl-(1-&gt;3)-[N-acetyl-beta-D-glucosaminyl-(1-&gt;6)]-N-acetyl-alpha-D-galactosaminyl}-L-seryl-[protein] + UDP + H(+). It carries out the reaction a 3-O-[beta-D-galactosyl-(1-&gt;3)-N-acetyl-alpha-D-galactosaminyl]-L-threonyl-[protein] + UDP-N-acetyl-alpha-D-glucosamine = a 3-O-{beta-D-galactosyl-(1-&gt;3)-[N-acetyl-beta-D-glucosaminyl-(1-&gt;6)]-N-acetyl-alpha-D-galactosaminyl}-L-threonyl-[protein] + UDP + H(+). The catalysed reaction is a globoside GalGb4Cer + UDP-N-acetyl-alpha-D-glucosamine = a globoside GlcNAc-(beta1-&gt;6)-GalGb4Cer + UDP + H(+). It catalyses the reaction a ganglioside GA1 + UDP-N-acetyl-alpha-D-glucosamine = a ganglioside beta-D-GlcNAc-(1-&gt;6)-GA1 + UDP + H(+). It participates in protein modification; protein glycosylation. The protein operates within glycolipid biosynthesis. With respect to regulation, inactivated by thiol-reactive agents. Inhibited by free UDP. Its function is as follows. Glycosyltransferase that catalyzes the transfer of an N-acetylglucosamine (GlcNAc) moiety in beta1-6 linkage from UDP-GlcNAc onto mucin-type core 1 O-glycan to form the branched mucin-type core 2 O-glycan. The catalysis is metal ion-independent and occurs with inversion of the anomeric configuration of sugar donor. Selectively involved in synthesis of mucin-type core 2 O-glycans that serve as scaffolds for the display of selectin ligand sialyl Lewis X epitope by myeloid cells, with an impact on homeostasis and recruitment to inflammatory sites. Can also act on glycolipid substrates. Transfers GlcNAc moiety to GalGb4Cer globosides in a reaction step to the synthesis of stage-specific embryonic antigen 1 (SSEA-1) determinant. Can use Galbeta1-3GalNAcalpha1-R and Galbeta1-3GalNAcbeta1-R oligosaccharide derivatives as acceptor substrates. The polypeptide is Beta-1,3-galactosyl-O-glycosyl-glycoprotein beta-1,6-N-acetylglucosaminyltransferase (Gcnt1) (Mus musculus (Mouse)).